Here is a 280-residue protein sequence, read N- to C-terminus: Shikimate dehydrogenase (NADP(+)) (280 aa).

Shikimate contacts are provided by residues 20–22 (SRS) and Thr-67. Catalysis depends on Lys-71, which acts as the Proton acceptor. Asp-82 contacts NADP(+). Shikimate contacts are provided by Asn-91 and Asp-106. Residues 131–135 (GAGGS) and Leu-220 each bind NADP(+). Tyr-222 contacts shikimate. Gly-243 is a binding site for NADP(+).

It belongs to the shikimate dehydrogenase family. As to quaternary structure, homodimer.

It carries out the reaction shikimate + NADP(+) = 3-dehydroshikimate + NADPH + H(+). The protein operates within metabolic intermediate biosynthesis; chorismate biosynthesis; chorismate from D-erythrose 4-phosphate and phosphoenolpyruvate: step 4/7. Its function is as follows. Involved in the biosynthesis of the chorismate, which leads to the biosynthesis of aromatic amino acids. Catalyzes the reversible NADPH linked reduction of 3-dehydroshikimate (DHSA) to yield shikimate (SA). This Rhodopseudomonas palustris (strain HaA2) protein is Shikimate dehydrogenase (NADP(+)).